Reading from the N-terminus, the 878-residue chain is NUT family member 2B (878 aa).

Disordered regions lie at residues 273–324 (WSQG…DDSC), 417–512 (QKSQ…PEEI), 527–560 (LLGP…PPDP), 624–693 (PPLK…GMAR), 709–757 (LRAA…EEEE), and 775–878 (WLPQ…HCSQ). Pro residues-rich tracts occupy residues 278–288 (PLPPPPPPAAQ) and 427–444 (CLPP…PPAP). Residues 476 to 487 (TKARRPPPRPHR) are compositionally biased toward basic residues. Over residues 537–551 (EPEKQREEGKVKQPQ) the composition is skewed to basic and acidic residues.

It belongs to the NUT family.

The protein is NUT family member 2B (NUTM2B) of Homo sapiens (Human).